The sequence spans 59 residues: Large ribosomal subunit protein bL32c (59 aa).

The segment at 37–59 (SRSFSRGNEHPKPKGFSGQQANK) is disordered.

The protein belongs to the bacterial ribosomal protein bL32 family.

It is found in the plastid. The protein localises to the chloroplast. In Zea mays (Maize), this protein is Large ribosomal subunit protein bL32c (rpl32).